Consider the following 227-residue polypeptide: Cytochrome c oxidase subunit 2 (227 aa).

Residues 1–14 (MAYPFQLGFQDATS) are Mitochondrial intermembrane-facing. A helical transmembrane segment spans residues 15–45 (PIMEELLHFHDHTLMIVFLISSLVLYIISSM). Over 46-59 (LTTKLTHTSTMDAQ) the chain is Mitochondrial matrix. Residues 60–87 (EVETIWTILPAIILILIALPSLRILYMM) form a helical membrane-spanning segment. Residues 88 to 227 (DEINNPSLTV…HFEEWSASML (140 aa)) lie on the Mitochondrial intermembrane side of the membrane. Positions 161, 196, 198, 200, 204, and 207 each coordinate Cu cation. Glutamate 198 contacts Mg(2+).

This sequence belongs to the cytochrome c oxidase subunit 2 family. Component of the cytochrome c oxidase (complex IV, CIV), a multisubunit enzyme composed of 14 subunits. The complex is composed of a catalytic core of 3 subunits MT-CO1, MT-CO2 and MT-CO3, encoded in the mitochondrial DNA, and 11 supernumerary subunits COX4I, COX5A, COX5B, COX6A, COX6B, COX6C, COX7A, COX7B, COX7C, COX8 and NDUFA4, which are encoded in the nuclear genome. The complex exists as a monomer or a dimer and forms supercomplexes (SCs) in the inner mitochondrial membrane with NADH-ubiquinone oxidoreductase (complex I, CI) and ubiquinol-cytochrome c oxidoreductase (cytochrome b-c1 complex, complex III, CIII), resulting in different assemblies (supercomplex SCI(1)III(2)IV(1) and megacomplex MCI(2)III(2)IV(2)). Found in a complex with TMEM177, COA6, COX18, COX20, SCO1 and SCO2. Interacts with TMEM177 in a COX20-dependent manner. Interacts with COX20. Interacts with COX16. The cofactor is Cu cation.

It localises to the mitochondrion inner membrane. The enzyme catalyses 4 Fe(II)-[cytochrome c] + O2 + 8 H(+)(in) = 4 Fe(III)-[cytochrome c] + 2 H2O + 4 H(+)(out). Component of the cytochrome c oxidase, the last enzyme in the mitochondrial electron transport chain which drives oxidative phosphorylation. The respiratory chain contains 3 multisubunit complexes succinate dehydrogenase (complex II, CII), ubiquinol-cytochrome c oxidoreductase (cytochrome b-c1 complex, complex III, CIII) and cytochrome c oxidase (complex IV, CIV), that cooperate to transfer electrons derived from NADH and succinate to molecular oxygen, creating an electrochemical gradient over the inner membrane that drives transmembrane transport and the ATP synthase. Cytochrome c oxidase is the component of the respiratory chain that catalyzes the reduction of oxygen to water. Electrons originating from reduced cytochrome c in the intermembrane space (IMS) are transferred via the dinuclear copper A center (CU(A)) of subunit 2 and heme A of subunit 1 to the active site in subunit 1, a binuclear center (BNC) formed by heme A3 and copper B (CU(B)). The BNC reduces molecular oxygen to 2 water molecules using 4 electrons from cytochrome c in the IMS and 4 protons from the mitochondrial matrix. This chain is Cytochrome c oxidase subunit 2 (MT-CO2), found in Equus caballus (Horse).